A 360-amino-acid chain; its full sequence is Peptide chain release factor 1 (360 aa).

Position 235 is an N5-methylglutamine (Gln235). The interval 285-305 is disordered; it reads KRQEAEASERRNLLGSGDRSD.

The protein belongs to the prokaryotic/mitochondrial release factor family. In terms of processing, methylated by PrmC. Methylation increases the termination efficiency of RF1.

It localises to the cytoplasm. Peptide chain release factor 1 directs the termination of translation in response to the peptide chain termination codons UAG and UAA. The sequence is that of Peptide chain release factor 1 from Proteus mirabilis (strain HI4320).